The chain runs to 539 residues: CTP synthase (539 aa).

Residues 1–268 are amidoligase domain; the sequence is MADTKYIFVT…DETVLRKVGL (268 aa). CTP is bound at residue S15. Residue S15 coordinates UTP. 16 to 21 contacts ATP; it reads SLGKGI. Position 56 (Y56) interacts with L-glutamine. ATP is bound at residue D73. Residues D73 and E143 each contribute to the Mg(2+) site. CTP-binding positions include 150–152, 189–194, and K225; these read DIE and KTKPTQ. UTP contacts are provided by residues 189–194 and K225; that span reads KTKPTQ. In terms of domain architecture, Glutamine amidotransferase type-1 spans 294–536; sequence TIALVGKYVE…IREAIKTRKK (243 aa). G356 serves as a coordination point for L-glutamine. C383 acts as the Nucleophile; for glutamine hydrolysis in catalysis. Residues 384–387, E407, and R464 contribute to the L-glutamine site; that span reads LGMQ. Residues H509 and E511 contribute to the active site.

The protein belongs to the CTP synthase family. In terms of assembly, homotetramer.

The enzyme catalyses UTP + L-glutamine + ATP + H2O = CTP + L-glutamate + ADP + phosphate + 2 H(+). The catalysed reaction is L-glutamine + H2O = L-glutamate + NH4(+). It carries out the reaction UTP + NH4(+) + ATP = CTP + ADP + phosphate + 2 H(+). Its pathway is pyrimidine metabolism; CTP biosynthesis via de novo pathway; CTP from UDP: step 2/2. Its activity is regulated as follows. Allosterically activated by GTP, when glutamine is the substrate; GTP has no effect on the reaction when ammonia is the substrate. The allosteric effector GTP functions by stabilizing the protein conformation that binds the tetrahedral intermediate(s) formed during glutamine hydrolysis. Inhibited by the product CTP, via allosteric rather than competitive inhibition. Catalyzes the ATP-dependent amination of UTP to CTP with either L-glutamine or ammonia as the source of nitrogen. Regulates intracellular CTP levels through interactions with the four ribonucleotide triphosphates. The chain is CTP synthase from Porphyromonas gingivalis (strain ATCC BAA-308 / W83).